A 134-amino-acid polypeptide reads, in one-letter code: Small ribosomal subunit protein uS8c (134 aa).

The protein belongs to the universal ribosomal protein uS8 family. Part of the 30S ribosomal subunit.

The protein localises to the plastid. It localises to the chloroplast. Its function is as follows. One of the primary rRNA binding proteins, it binds directly to 16S rRNA central domain where it helps coordinate assembly of the platform of the 30S subunit. This Panax ginseng (Korean ginseng) protein is Small ribosomal subunit protein uS8c (rps8).